Reading from the N-terminus, the 224-residue chain is MTALTPPQHEAELLQRAKSIAGLTFAELAEELNLVVPPDLKRDKGWVGMLIETALGATAGSKAEQDFSHLGIELKTIPVNQQGYPLETTFVSLAPLAQNSGVTWHSSHVRYKLSKVLWIPIEGERQIPLAERHVGVPILWQPSSSQEQRLRQDWEELMDYIVLGKLTEITARIGEVLQLRPKGANSRALTKGIGKNGEIIDTLPLGFYLRKEFTAEILHDFLMD.

The protein belongs to the MutH family.

The protein resides in the cytoplasm. In terms of biological role, sequence-specific endonuclease that cleaves unmethylated GATC sequences. It is involved in DNA mismatch repair. The protein is DNA mismatch repair protein MutH of Histophilus somni (strain 2336) (Haemophilus somnus).